The following is an 89-amino-acid chain: Small ribosomal subunit protein uS14A (89 aa).

Belongs to the universal ribosomal protein uS14 family. As to quaternary structure, part of the 30S ribosomal subunit. Contacts proteins S3 and S10.

In terms of biological role, binds 16S rRNA, required for the assembly of 30S particles and may also be responsible for determining the conformation of the 16S rRNA at the A site. This chain is Small ribosomal subunit protein uS14A, found in Pediococcus pentosaceus (strain ATCC 25745 / CCUG 21536 / LMG 10740 / 183-1w).